The chain runs to 479 residues: Anaerobic nitric oxide reductase flavorubredoxin (479 aa).

Residues 30–210 (LRGSSYNSYL…PFSRLVTPKI (181 aa)) are zinc metallo-hydrolase. His-79, Glu-81, Asp-83, His-147, Asp-166, and His-227 together coordinate Fe cation. One can recognise a Flavodoxin-like domain in the interval 254 to 393 (ITIFYDTMSN…LCREHGREIA (140 aa)). Residues 260–264 (TMSNN) and 342–369 (AFGS…EMSL) each bind FMN. The region spanning 423 to 474 (GPRMQCSVCQWIYDPAKGEPMQDVAPGTPWSEVPDNFLCPECSLGKDVFDEL) is the Rubredoxin-like domain. Fe cation contacts are provided by Cys-428, Cys-431, Cys-461, and Cys-464.

This sequence in the N-terminal section; belongs to the zinc metallo-hydrolase group 3 family. As to quaternary structure, homotetramer. Requires Fe cation as cofactor. FMN serves as cofactor.

The protein localises to the cytoplasm. Its pathway is nitrogen metabolism; nitric oxide reduction. In terms of biological role, anaerobic nitric oxide reductase; uses NADH to detoxify nitric oxide (NO), protecting several 4Fe-4S NO-sensitive enzymes. Has at least 2 reductase partners, only one of which (NorW, flavorubredoxin reductase) has been identified. NO probably binds to the di-iron center; electrons enter from the NorW at rubredoxin and are transferred sequentially to the FMN center and the di-iron center. Also able to function as an aerobic oxygen reductase. The chain is Anaerobic nitric oxide reductase flavorubredoxin from Escherichia coli (strain SMS-3-5 / SECEC).